A 219-amino-acid polypeptide reads, in one-letter code: MSTMNLILMGLPGAGKGTQAQKILEDFDIPHISTGDIFRAAIKNETKMGLEAKKYIDAGNLVPDEVTNGIVRDRLAEADTKNGFLLDGYPRNIDQAHALKQIGEELNKPLDGVINIHVEPAVLVERLSGRFICRTCGATYHKLYNKPKVEGTCDVCGGHDFYQRDDDKPATVKNRLDVNIKLNTPLIDYYGQEKLLYNVDGDRDIDDVYKDIKKILDNL.

13–18 (GAGKGT) serves as a coordination point for ATP. The tract at residues 33–62 (STGDIFRAAIKNETKMGLEAKKYIDAGNLV) is NMP. Residues Thr34, Arg39, 60–62 (NLV), 88–91 (GYPR), and Gln95 each bind AMP. An LID region spans residues 129–167 (GRFICRTCGATYHKLYNKPKVEGTCDVCGGHDFYQRDDD). Arg130 serves as a coordination point for ATP. Cys133 and Cys136 together coordinate Zn(2+). 139–140 (TY) serves as a coordination point for ATP. Residues Cys153 and Cys156 each coordinate Zn(2+). Residues Arg164 and Arg175 each contribute to the AMP site. ATP is bound at residue Arg203.

The protein belongs to the adenylate kinase family. Monomer.

It localises to the cytoplasm. It carries out the reaction AMP + ATP = 2 ADP. The protein operates within purine metabolism; AMP biosynthesis via salvage pathway; AMP from ADP: step 1/1. Functionally, catalyzes the reversible transfer of the terminal phosphate group between ATP and AMP. Plays an important role in cellular energy homeostasis and in adenine nucleotide metabolism. The protein is Adenylate kinase of Lactiplantibacillus plantarum (strain ATCC BAA-793 / NCIMB 8826 / WCFS1) (Lactobacillus plantarum).